We begin with the raw amino-acid sequence, 37 residues long: Large ribosomal subunit protein bL36 (37 aa).

It belongs to the bacterial ribosomal protein bL36 family.

In Psychromonas ingrahamii (strain DSM 17664 / CCUG 51855 / 37), this protein is Large ribosomal subunit protein bL36.